Consider the following 166-residue polypeptide: Interleukin-3 (166 aa).

The signal sequence occupies residues 1 to 26 (MVLASSTTSIHTMLLLLLMLFHLGLQ). An N-linked (GlcNAc...) asparagine glycan is attached at Asn-42. 2 disulfide bridges follow: Cys-43-Cys-106 and Cys-105-Cys-166. Asn-112 is a glycosylation site (N-linked (GlcNAc...) asparagine; partial). The segment at 145 to 166 (LTSRPPQPASGSVSPNRGTVEC) is disordered.

It belongs to the IL-3 family. In terms of assembly, monomer. In terms of tissue distribution, activated T-cells, mast cells, natural killer cells.

It localises to the secreted. In terms of biological role, cytokine secreted predominantly by activated T-lymphocytes as well as mast cells and osteoblastic cells that controls the production and differentiation of hematopoietic progenitor cells into lineage-restricted cells. Also stimulates mature basophils, eosinophils, and monocytes to become functionally activated. In addition, plays an important role in neural cell proliferation and survival. Participates as well in bone homeostasis and inhibits osteoclast differentiation by preventing NF-kappa-B nuclear translocation and activation. Mechanistically, exerts its biological effects through a receptor composed of IL3RA subunit and a signal transducing subunit IL3RB. Receptor stimulation results in the rapid activation of JAK2 kinase activity leading to STAT5-mediated transcriptional program. Alternatively, contributes to cell survival under oxidative stress in non-hematopoietic systems by activating pathways mediated by PI3K/AKT and ERK. The protein is Interleukin-3 (Il3) of Mus musculus (Mouse).